The following is a 320-amino-acid chain: Lipoyl synthase (320 aa).

[4Fe-4S] cluster-binding residues include Cys-67, Cys-72, Cys-78, Cys-93, Cys-97, Cys-100, and Ser-307. A Radical SAM core domain is found at 79-296 (FNHGTATFMI…REKANEMGFE (218 aa)).

Belongs to the radical SAM superfamily. Lipoyl synthase family. The cofactor is [4Fe-4S] cluster.

It is found in the cytoplasm. The enzyme catalyses [[Fe-S] cluster scaffold protein carrying a second [4Fe-4S](2+) cluster] + N(6)-octanoyl-L-lysyl-[protein] + 2 oxidized [2Fe-2S]-[ferredoxin] + 2 S-adenosyl-L-methionine + 4 H(+) = [[Fe-S] cluster scaffold protein] + N(6)-[(R)-dihydrolipoyl]-L-lysyl-[protein] + 4 Fe(3+) + 2 hydrogen sulfide + 2 5'-deoxyadenosine + 2 L-methionine + 2 reduced [2Fe-2S]-[ferredoxin]. It functions in the pathway protein modification; protein lipoylation via endogenous pathway; protein N(6)-(lipoyl)lysine from octanoyl-[acyl-carrier-protein]: step 2/2. Functionally, catalyzes the radical-mediated insertion of two sulfur atoms into the C-6 and C-8 positions of the octanoyl moiety bound to the lipoyl domains of lipoate-dependent enzymes, thereby converting the octanoylated domains into lipoylated derivatives. This chain is Lipoyl synthase, found in Glaesserella parasuis serovar 5 (strain SH0165) (Haemophilus parasuis).